The primary structure comprises 49 residues: Peridinin-chlorophyll a-binding protein (49 aa).

Monomer. Binds 12 peridinin and 2 chlorophyll a molecules per monomer.

The protein localises to the plastid. The protein resides in the chloroplast. Water-soluble antenna for capture of solar energy in the blue-green range. Peridinin is an asymmetric carotenoid. This Alexandrium cohorticula (Dinoflagellate) protein is Peridinin-chlorophyll a-binding protein.